We begin with the raw amino-acid sequence, 399 residues long: Elongation factor Tu (399 aa).

The tr-type G domain maps to 10 to 204 (KPHVNIGTIG…AVDANIPEPE (195 aa)). The G1 stretch occupies residues 19–26 (GHVDHGKT). 19–26 (GHVDHGKT) is a binding site for GTP. Thr26 contributes to the Mg(2+) binding site. The interval 60–64 (GITIN) is G2. Residues 81-84 (DCPG) form a G3 region. Residues 81–85 (DCPGH) and 136–139 (NKCD) contribute to the GTP site. The interval 136-139 (NKCD) is G4. Positions 174-176 (SGL) are G5.

The protein belongs to the TRAFAC class translation factor GTPase superfamily. Classic translation factor GTPase family. EF-Tu/EF-1A subfamily. As to quaternary structure, monomer.

The protein localises to the cytoplasm. The catalysed reaction is GTP + H2O = GDP + phosphate + H(+). In terms of biological role, GTP hydrolase that promotes the GTP-dependent binding of aminoacyl-tRNA to the A-site of ribosomes during protein biosynthesis. The polypeptide is Elongation factor Tu (Synechococcus sp. (strain WH7803)).